The sequence spans 143 residues: Large-conductance mechanosensitive channel (143 aa).

2 consecutive transmembrane segments (helical) span residues 10–30 (FAVKGNVMDLAIGVIIGGAFS) and 89–109 (GSFITVLINFIILAFIIFLMV).

Belongs to the MscL family. Homopentamer.

The protein localises to the cell inner membrane. Functionally, channel that opens in response to stretch forces in the membrane lipid bilayer. May participate in the regulation of osmotic pressure changes within the cell. This Burkholderia pseudomallei (strain 668) protein is Large-conductance mechanosensitive channel.